The following is a 121-amino-acid chain: Large ribosomal subunit protein uL14 (121 aa).

Belongs to the universal ribosomal protein uL14 family. In terms of assembly, part of the 50S ribosomal subunit. Forms a cluster with proteins L3 and L19. In the 70S ribosome, L14 and L19 interact and together make contacts with the 16S rRNA in bridges B5 and B8.

Binds to 23S rRNA. Forms part of two intersubunit bridges in the 70S ribosome. The polypeptide is Large ribosomal subunit protein uL14 (Phocaeicola vulgatus (strain ATCC 8482 / DSM 1447 / JCM 5826 / CCUG 4940 / NBRC 14291 / NCTC 11154) (Bacteroides vulgatus)).